A 75-amino-acid polypeptide reads, in one-letter code: Small ribosomal subunit protein bS21B (75 aa).

The segment covering 33 to 52 (RRSYEKPSERRAREKAEAVR) has biased composition (basic and acidic residues). The disordered stretch occupies residues 33–75 (RRSYEKPSERRAREKAEAVRRARKLARKQAQREGLLPGKKRAA).

It belongs to the bacterial ribosomal protein bS21 family.

This chain is Small ribosomal subunit protein bS21B, found in Chelativorans sp. (strain BNC1).